Consider the following 136-residue polypeptide: MDGEVKSYWFKTFSHKSFSVIWDLFYNTSNGVTKKTINSGTILNHLNEVGLAYWVMGDGSLHREGRVLTLHTQGFSHDENKMMSEELNLKFGFKSKVVKHKNKFVVQFTTSDANKLHDLIKPYLIPTMQYKLPRKL.

This sequence belongs to the LAGLIDADG endonuclease family.

It is found in the mitochondrion. Functionally, mitochondrial DNA endonuclease involved in intron homing. The polypeptide is Probable intron-encoded DNA endonuclease 3 (hegI3) (Mycosarcoma maydis (Corn smut fungus)).